Here is a 199-residue protein sequence, read N- to C-terminus: uncharacterized protein (199 aa).

Positions 1-23 are cleaved as a signal peptide; that stretch reads MKPGCTLFFLLCSALTVTTEAHA.

This is an uncharacterized protein from Escherichia coli (strain K12).